We begin with the raw amino-acid sequence, 393 residues long: NAD(P)H-quinone oxidoreductase subunit H, chloroplastic (393 aa).

The protein belongs to the complex I 49 kDa subunit family. NDH is composed of at least 16 different subunits, 5 of which are encoded in the nucleus.

The protein resides in the plastid. It localises to the chloroplast thylakoid membrane. The catalysed reaction is a plastoquinone + NADH + (n+1) H(+)(in) = a plastoquinol + NAD(+) + n H(+)(out). The enzyme catalyses a plastoquinone + NADPH + (n+1) H(+)(in) = a plastoquinol + NADP(+) + n H(+)(out). In terms of biological role, NDH shuttles electrons from NAD(P)H:plastoquinone, via FMN and iron-sulfur (Fe-S) centers, to quinones in the photosynthetic chain and possibly in a chloroplast respiratory chain. The immediate electron acceptor for the enzyme in this species is believed to be plastoquinone. Couples the redox reaction to proton translocation, and thus conserves the redox energy in a proton gradient. The chain is NAD(P)H-quinone oxidoreductase subunit H, chloroplastic from Nicotiana tomentosiformis (Tobacco).